Here is a 1081-residue protein sequence, read N- to C-terminus: Probable cellulose synthase A catalytic subunit 8 [UDP-forming] (1081 aa).

The Cytoplasmic portion of the chain corresponds to 1–277 (MDGDADAVKS…PSSRINPYRM (277 aa)). Residues C19, C22, C38, C41, C46, C49, C61, and C64 each contribute to the Zn(2+) site. The segment at 19 to 65 (CQICGDGVGTTAEGDVFAACDVCGFPVCRPCYEYERKDGTQACPQCK) adopts an RING-type; degenerate zinc-finger fold. The tract at residues 72-148 (KGSPAIRGEE…YDSGEIPRGY (77 aa)) is disordered. The span at 81–91 (EGEDTDADDVS) shows a compositional bias: acidic residues. Basic and acidic residues predominate over residues 103-112 (QKQKIADRMR). The helical transmembrane segment at 278–298 (VIVLRLVVLSIFLHYRITNPV) threads the bilayer. Topologically, residues 299–300 (RN) are extracellular. Residues 301–321 (AYPLWLLSVICEIWFALSWIL) traverse the membrane as a helical segment. At 322–864 (DQFPKWFPIN…INTTIYPLTS (543 aa)) the chain is on the cytoplasmic side. UDP-alpha-D-glucose is bound by residues S360, K366, E367, and D396. Residue D396 is part of the active site. The stretch at 450-477 (VKDRRAMKREYEEFKVRINGLVAKAQKV) forms a coiled coil. K537 provides a ligand contact to UDP-alpha-D-glucose. Mn(2+) is bound by residues K538 and D562. A disordered region spans residues 660–684 (SLCGGRKKASKSKKKSSDKKKSNKH). Basic residues predominate over residues 664–682 (GRKKASKSKKKSSDKKKSN). D781 is an active-site residue. Residues 865-885 (IPLLIYCVLPAICLLTGKFII) form a helical membrane-spanning segment. Residues 886-890 (PEISN) are Extracellular-facing. A helical transmembrane segment spans residues 891–911 (FASIWFISLFISIFATGILEM). The Cytoplasmic portion of the chain corresponds to 912 to 926 (RWSGVGIDEWWRNEQ). Residues 927 to 947 (FWVIGGISAHLFAVFQGLLKV) traverse the membrane as a helical segment. The Extracellular portion of the chain corresponds to 948–977 (LAGIDTNFTVTSKASDEDGDFAELYMFKWT). N954 carries N-linked (GlcNAc...) asparagine glycosylation. Residues 978-998 (TLLIPPTTILIINLVGVVAGI) traverse the membrane as a helical segment. Over 999–1009 (SYAINSGYQSW) the chain is Cytoplasmic. Residues 1010 to 1030 (GPLFGKLFFAFWVIVHLYPFL) traverse the membrane as a helical segment. The Extracellular portion of the chain corresponds to 1031 to 1039 (KGLMGRQNR). A helical membrane pass occupies residues 1040 to 1060 (TPTIVVVWAILLASIFSLLWV). Topologically, residues 1061–1081 (RIDPFTTRVTGPDTQTCGINC) are cytoplasmic.

Belongs to the glycosyltransferase 2 family. Plant cellulose synthase subfamily. Mn(2+) serves as cofactor. It depends on Zn(2+) as a cofactor.

The protein localises to the cell membrane. It catalyses the reaction [(1-&gt;4)-beta-D-glucosyl](n) + UDP-alpha-D-glucose = [(1-&gt;4)-beta-D-glucosyl](n+1) + UDP + H(+). The protein operates within glycan metabolism; plant cellulose biosynthesis. Functionally, probable catalytic subunit of cellulose synthase terminal complexes ('rosettes'), required for beta-1,4-glucan microfibril crystallization, a major mechanism of the cell wall formation. The sequence is that of Probable cellulose synthase A catalytic subunit 8 [UDP-forming] (CESA8) from Oryza sativa subsp. japonica (Rice).